The sequence spans 209 residues: Small ribosomal subunit protein uS4 (209 aa).

The region spanning 98–164 is the S4 RNA-binding domain; the sequence is RRLDNVVYRL…LPVKNAIELN (67 aa).

This sequence belongs to the universal ribosomal protein uS4 family. Part of the 30S ribosomal subunit. Contacts protein S5. The interaction surface between S4 and S5 is involved in control of translational fidelity.

Its function is as follows. One of the primary rRNA binding proteins, it binds directly to 16S rRNA where it nucleates assembly of the body of the 30S subunit. In terms of biological role, with S5 and S12 plays an important role in translational accuracy. The chain is Small ribosomal subunit protein uS4 from Thermosipho africanus (strain TCF52B).